Reading from the N-terminus, the 738-residue chain is Polyphosphate kinase (738 aa).

Residues Met-1–Leu-48 are disordered. Residues Ala-19–Asp-30 are compositionally biased toward basic and acidic residues. Asn-91 contacts ATP. Positions 427 and 457 each coordinate Mg(2+). Residue His-487 is the Phosphohistidine intermediate of the active site. ATP is bound by residues Tyr-520, Arg-620, and His-648.

This sequence belongs to the polyphosphate kinase 1 (PPK1) family. The cofactor is Mg(2+). An intermediate of this reaction is the autophosphorylated ppk in which a phosphate is covalently linked to a histidine residue through a N-P bond.

The enzyme catalyses [phosphate](n) + ATP = [phosphate](n+1) + ADP. Its function is as follows. Catalyzes the reversible transfer of the terminal phosphate of ATP to form a long-chain polyphosphate (polyP). In Mycobacterium marinum (strain ATCC BAA-535 / M), this protein is Polyphosphate kinase.